The chain runs to 270 residues: Phosphatidylglycerol--prolipoprotein diacylglyceryl transferase (270 aa).

The next 4 membrane-spanning stretches (helical) occupy residues 19-39 (FPVY…LWLA), 54-74 (IDLV…YYVI), 92-112 (QGGL…ILFA), and 116-136 (GLSF…GQAI). R138 is an a 1,2-diacyl-sn-glycero-3-phospho-(1'-sn-glycerol) binding site. 3 helical membrane passes run 178 to 198 (HPTF…LLAL), 206 to 226 (GELF…VEGL), and 236 to 256 (LRIA…FIIV).

Belongs to the Lgt family.

The protein localises to the cell membrane. The catalysed reaction is L-cysteinyl-[prolipoprotein] + a 1,2-diacyl-sn-glycero-3-phospho-(1'-sn-glycerol) = an S-1,2-diacyl-sn-glyceryl-L-cysteinyl-[prolipoprotein] + sn-glycerol 1-phosphate + H(+). Its pathway is protein modification; lipoprotein biosynthesis (diacylglyceryl transfer). Functionally, catalyzes the transfer of the diacylglyceryl group from phosphatidylglycerol to the sulfhydryl group of the N-terminal cysteine of a prolipoprotein, the first step in the formation of mature lipoproteins. The chain is Phosphatidylglycerol--prolipoprotein diacylglyceryl transferase from Bacillus mycoides (strain KBAB4) (Bacillus weihenstephanensis).